The primary structure comprises 153 residues: 3-hydroxyacyl-[acyl-carrier-protein] dehydratase FabZ (153 aa).

His54 is an active-site residue.

This sequence belongs to the thioester dehydratase family. FabZ subfamily.

Its subcellular location is the cytoplasm. It carries out the reaction a (3R)-hydroxyacyl-[ACP] = a (2E)-enoyl-[ACP] + H2O. Its function is as follows. Involved in unsaturated fatty acids biosynthesis. Catalyzes the dehydration of short chain beta-hydroxyacyl-ACPs and long chain saturated and unsaturated beta-hydroxyacyl-ACPs. The sequence is that of 3-hydroxyacyl-[acyl-carrier-protein] dehydratase FabZ from Shewanella denitrificans (strain OS217 / ATCC BAA-1090 / DSM 15013).